A 422-amino-acid polypeptide reads, in one-letter code: MSQKTERPVLSGQRIKTRKRDEREKYDPTGFRDAVIAGLEKTEGDLEQISKYLDSAGNKLDYRRYGEVLFDILIAGGLLVPGGSISQDGEKPRTSYCIFDAPESMESMRNHEQVFVKLIRRYKYLEKMFEEEMGKVLLFVKGFTPSERIKLARMTALWLVNGSVPPNVLLVLNNEHLIKDGIALEFLLELFQTFKQEKGIAYLIQALKKGGLESKLMDFFPPNKRTEEYFKQVFLDKELNEIVKLHKAQASQEAKRELQQALIDDINDEKPYNEITSDIKDFSQRTNIPDHEIIVIIWSTIMSLGEWNKKEELVTDQAVRHLKNYCPLLQAFASTDRSELALILKVQEFCYENMNFMKAFQKIILLFYKTEVLSEEIILRWYKEGHSNKGKMHFLEQMRKFVEWLQSAEEESESEDEQKNGE.

The disordered stretch occupies residues 1–26; it reads MSQKTERPVLSGQRIKTRKRDEREKY. One can recognise a W2 domain in the interval 244–415; that stretch reads KLHKAQASQE…QSAEEESESE (172 aa). Phosphoserine occurs at positions 407, 412, and 414.

The protein belongs to the BZW family. As to expression, expressed in mushroom bodies.

Functionally, may be involved in memory formation. The chain is Protein krasavietz (kra) from Drosophila melanogaster (Fruit fly).